Consider the following 386-residue polypeptide: Alpha-D-kanosaminyltransferase (386 aa).

Belongs to the glycosyltransferase group 1 family.

The enzyme catalyses 2'-deamino-2'-hydroxyneamine + UDP-alpha-D-kanosamine = kanamycin A + UDP + H(+). The catalysed reaction is neamine + UDP-alpha-D-kanosamine = kanamycin B + UDP + H(+). It catalyses the reaction paromamine + UDP-alpha-D-kanosamine = kanamycin C + UDP + H(+). It carries out the reaction 2'-deamino-2'-hydroxyparomamine + UDP-alpha-D-kanosamine = kanamycin X + UDP + H(+). The protein operates within antibiotic biosynthesis; kanamycin biosynthesis. Glycosyltransferase involved in the biosynthesis of kanamycins by catalyzing the transfer of the hexose kanosamine from UDP-alpha-D-kanosamine to disaccharide precursors. Can also use UDP-alpha-D-glucose as sugar donor with much lower efficiency. This Streptomyces kanamyceticus protein is Alpha-D-kanosaminyltransferase (kanE).